The sequence spans 592 residues: Proteasome-associated ATPase (592 aa).

A compositionally biased stretch (acidic residues) spans 1–11 (MTGYDSSEEAE). Positions 1 to 24 (MTGYDSSEEAERDSSPADGYRQTP) are disordered. A coiled-coil region spans residues 25–99 (AQLSAQIRVL…LKEEVDRLAQ (75 aa)). 281–286 (GCGKTL) serves as a coordination point for ATP. Positions 591 to 592 (YL) are docks into pockets in the proteasome alpha-ring.

The protein belongs to the AAA ATPase family. In terms of assembly, homohexamer. Assembles into a hexameric ring structure that caps the 20S proteasome core. Strongly interacts with the prokaryotic ubiquitin-like protein Pup through a hydrophobic interface; the interacting region of ARC lies in its N-terminal coiled-coil domain. There is one Pup binding site per ARC hexamer ring. Upon ATP-binding, the C-terminus of ARC interacts with the alpha-rings of the proteasome core, possibly by binding to the intersubunit pockets.

It participates in protein degradation; proteasomal Pup-dependent pathway. ATPase which is responsible for recognizing, binding, unfolding and translocation of pupylated proteins into the bacterial 20S proteasome core particle. May be essential for opening the gate of the 20S proteasome via an interaction with its C-terminus, thereby allowing substrate entry and access to the site of proteolysis. Thus, the C-termini of the proteasomal ATPase may function like a 'key in a lock' to induce gate opening and therefore regulate proteolysis. The protein is Proteasome-associated ATPase of Nakamurella multipartita (strain ATCC 700099 / DSM 44233 / CIP 104796 / JCM 9543 / NBRC 105858 / Y-104) (Microsphaera multipartita).